Reading from the N-terminus, the 157-residue chain is SsrA-binding protein (157 aa).

The tract at residues 135–157 is disordered; sequence KRDTIKDREGKREVERAMKTNHR.

It belongs to the SmpB family.

The protein localises to the cytoplasm. Functionally, required for rescue of stalled ribosomes mediated by trans-translation. Binds to transfer-messenger RNA (tmRNA), required for stable association of tmRNA with ribosomes. tmRNA and SmpB together mimic tRNA shape, replacing the anticodon stem-loop with SmpB. tmRNA is encoded by the ssrA gene; the 2 termini fold to resemble tRNA(Ala) and it encodes a 'tag peptide', a short internal open reading frame. During trans-translation Ala-aminoacylated tmRNA acts like a tRNA, entering the A-site of stalled ribosomes, displacing the stalled mRNA. The ribosome then switches to translate the ORF on the tmRNA; the nascent peptide is terminated with the 'tag peptide' encoded by the tmRNA and targeted for degradation. The ribosome is freed to recommence translation, which seems to be the essential function of trans-translation. The protein is SsrA-binding protein of Albidiferax ferrireducens (strain ATCC BAA-621 / DSM 15236 / T118) (Rhodoferax ferrireducens).